The chain runs to 250 residues: Small ribosomal subunit protein uS2 (250 aa).

Residues 225 to 250 (GAQGGRQARGEDLGAAVEAPSEDALA) are disordered.

It belongs to the universal ribosomal protein uS2 family.

In Rhizorhabdus wittichii (strain DSM 6014 / CCUG 31198 / JCM 15750 / NBRC 105917 / EY 4224 / RW1) (Sphingomonas wittichii), this protein is Small ribosomal subunit protein uS2.